A 205-amino-acid chain; its full sequence is Imidazole glycerol phosphate synthase subunit HisH (205 aa).

Residues 1–205 enclose the Glutamine amidotransferase type-1 domain; that stretch reads MVGIVNYNIG…RILKNFCEIG (205 aa). C79 (nucleophile) is an active-site residue. Active-site residues include H186 and E188.

Heterodimer of HisH and HisF.

Its subcellular location is the cytoplasm. The catalysed reaction is 5-[(5-phospho-1-deoxy-D-ribulos-1-ylimino)methylamino]-1-(5-phospho-beta-D-ribosyl)imidazole-4-carboxamide + L-glutamine = D-erythro-1-(imidazol-4-yl)glycerol 3-phosphate + 5-amino-1-(5-phospho-beta-D-ribosyl)imidazole-4-carboxamide + L-glutamate + H(+). The enzyme catalyses L-glutamine + H2O = L-glutamate + NH4(+). It participates in amino-acid biosynthesis; L-histidine biosynthesis; L-histidine from 5-phospho-alpha-D-ribose 1-diphosphate: step 5/9. Its function is as follows. IGPS catalyzes the conversion of PRFAR and glutamine to IGP, AICAR and glutamate. The HisH subunit catalyzes the hydrolysis of glutamine to glutamate and ammonia as part of the synthesis of IGP and AICAR. The resulting ammonia molecule is channeled to the active site of HisF. The polypeptide is Imidazole glycerol phosphate synthase subunit HisH (Wolinella succinogenes (strain ATCC 29543 / DSM 1740 / CCUG 13145 / JCM 31913 / LMG 7466 / NCTC 11488 / FDC 602W) (Vibrio succinogenes)).